The sequence spans 207 residues: MTKLSKRQQQILEFIKQEVKTKGYPPSVREIGEAVGLASSSTVHGHLARLESKGYIRRDPTKPRAIEILDNDMAKEREKEEIISVPIIGKVTAGQPITAVENIEGYFPLPKRLAAGEEQLFMLEVMGDSMIEAGILDGDYVIVRQQSSANNGDIVVAMTEDNEATVKRFFKEKDHIRLQPENAHLEPIIVRDCTILGKVIGVYRLFD.

Residues 28-48 (VREIGEAVGLASSSTVHGHLA) constitute a DNA-binding region (H-T-H motif). Catalysis depends on for autocatalytic cleavage activity residues Ser-129 and Lys-167.

Belongs to the peptidase S24 family. As to quaternary structure, homodimer.

It catalyses the reaction Hydrolysis of Ala-|-Gly bond in repressor LexA.. Its function is as follows. Represses a number of genes involved in the response to DNA damage (SOS response), including recA and lexA. In the presence of single-stranded DNA, RecA interacts with LexA causing an autocatalytic cleavage which disrupts the DNA-binding part of LexA, leading to derepression of the SOS regulon and eventually DNA repair. This is LexA repressor from Geobacillus kaustophilus (strain HTA426).